The chain runs to 275 residues: Ribosomal RNA small subunit methyltransferase A (275 aa).

S-adenosyl-L-methionine-binding residues include Asn-19, Leu-21, Gly-46, Glu-71, Asp-94, and Asn-117.

Belongs to the class I-like SAM-binding methyltransferase superfamily. rRNA adenine N(6)-methyltransferase family. RsmA subfamily.

It is found in the cytoplasm. It catalyses the reaction adenosine(1518)/adenosine(1519) in 16S rRNA + 4 S-adenosyl-L-methionine = N(6)-dimethyladenosine(1518)/N(6)-dimethyladenosine(1519) in 16S rRNA + 4 S-adenosyl-L-homocysteine + 4 H(+). Specifically dimethylates two adjacent adenosines (A1518 and A1519) in the loop of a conserved hairpin near the 3'-end of 16S rRNA in the 30S particle. May play a critical role in biogenesis of 30S subunits. The protein is Ribosomal RNA small subunit methyltransferase A of Burkholderia multivorans (strain ATCC 17616 / 249).